The sequence spans 142 residues: Universal stress protein C (142 aa).

It belongs to the universal stress protein A family.

Its subcellular location is the cytoplasm. Its function is as follows. Required for resistance to DNA-damaging agents. In Escherichia coli (strain K12), this protein is Universal stress protein C (uspC).